The chain runs to 99 residues: UPF0235 protein PM1313 (99 aa).

The protein belongs to the UPF0235 family.

In Pasteurella multocida (strain Pm70), this protein is UPF0235 protein PM1313.